A 177-amino-acid chain; its full sequence is Thymidine kinase (177 aa).

Residue 11 to 18 participates in ATP binding; it reads GPMFSGKS. Catalysis depends on E83, which acts as the Proton acceptor. F113 is a binding site for substrate. Zn(2+)-binding residues include C138 and C141. 157-161 contacts substrate; the sequence is IEIIG. Zn(2+) is bound by residues C170 and C173.

It belongs to the thymidine kinase family. As to quaternary structure, homotetramer. Two molecules of substrate bind to each enzyme tetramer.

The enzyme catalyses thymidine + ATP = dTMP + ADP + H(+). Phosphorylates thymidine and thymidine analogs, such as azidothymidine (AZT). Part of the salvage pathway for pyrimidine deoxyribonucleotide synthesis. This is Thymidine kinase (OPG101) from Procyon lotor (Raccoon).